The following is a 279-amino-acid chain: Bifunctional protein FolD (279 aa).

Residues 164–166, serine 189, and isoleucine 230 each bind NADP(+); that span reads GRS.

This sequence belongs to the tetrahydrofolate dehydrogenase/cyclohydrolase family. In terms of assembly, homodimer.

The catalysed reaction is (6R)-5,10-methylene-5,6,7,8-tetrahydrofolate + NADP(+) = (6R)-5,10-methenyltetrahydrofolate + NADPH. It carries out the reaction (6R)-5,10-methenyltetrahydrofolate + H2O = (6R)-10-formyltetrahydrofolate + H(+). It participates in one-carbon metabolism; tetrahydrofolate interconversion. Its function is as follows. Catalyzes the oxidation of 5,10-methylenetetrahydrofolate to 5,10-methenyltetrahydrofolate and then the hydrolysis of 5,10-methenyltetrahydrofolate to 10-formyltetrahydrofolate. In Agathobacter rectalis (strain ATCC 33656 / DSM 3377 / JCM 17463 / KCTC 5835 / VPI 0990) (Eubacterium rectale), this protein is Bifunctional protein FolD.